Reading from the N-terminus, the 367-residue chain is UDP-N-acetylglucosamine--N-acetylmuramyl-(pentapeptide) pyrophosphoryl-undecaprenol N-acetylglucosamine transferase (367 aa).

UDP-N-acetyl-alpha-D-glucosamine is bound by residues 15 to 17, asparagine 127, arginine 163, serine 191, isoleucine 249, and glutamine 294; that span reads TGG.

This sequence belongs to the glycosyltransferase 28 family. MurG subfamily.

It is found in the cell inner membrane. The catalysed reaction is di-trans,octa-cis-undecaprenyl diphospho-N-acetyl-alpha-D-muramoyl-L-alanyl-D-glutamyl-meso-2,6-diaminopimeloyl-D-alanyl-D-alanine + UDP-N-acetyl-alpha-D-glucosamine = di-trans,octa-cis-undecaprenyl diphospho-[N-acetyl-alpha-D-glucosaminyl-(1-&gt;4)]-N-acetyl-alpha-D-muramoyl-L-alanyl-D-glutamyl-meso-2,6-diaminopimeloyl-D-alanyl-D-alanine + UDP + H(+). Its pathway is cell wall biogenesis; peptidoglycan biosynthesis. Cell wall formation. Catalyzes the transfer of a GlcNAc subunit on undecaprenyl-pyrophosphoryl-MurNAc-pentapeptide (lipid intermediate I) to form undecaprenyl-pyrophosphoryl-MurNAc-(pentapeptide)GlcNAc (lipid intermediate II). The chain is UDP-N-acetylglucosamine--N-acetylmuramyl-(pentapeptide) pyrophosphoryl-undecaprenol N-acetylglucosamine transferase from Burkholderia cenocepacia (strain HI2424).